Consider the following 1053-residue polypeptide: MNLSRILLLSMFFLSAMGQLPSQDIMALLEFKKGIKHDPTGFVLNSWNDESIDFNGCPSSWNGIVCNGGNVAGVVLDNLGLTADADFSLFSNLTKLVKLSMSNNSLSGVLPNDLGSFKSLQFLDLSDNLFSSSLPKEIGRSVSLRNLSLSGNNFSGEIPESMGGLISLQSLDMSSNSLSGPLPKSLTRLNDLLYLNLSSNGFTGKMPRGFELISSLEVLDLHGNSIDGNLDGEFFLLTNASYVDISGNRLVTTSGKLLPGVSESIKHLNLSHNQLEGSLTSGFQLFQNLKVLDLSYNMLSGELPGFNYVYDLEVLKLSNNRFSGSLPNNLLKGDSLLLTTLDLSGNNLSGPVSSIMSTTLHTLDLSSNSLTGELPLLTGGCVLLDLSNNQFEGNLTRWSKWENIEYLDLSQNHFTGSFPDATPQLLRANHLNLSYNKLTGSLPERIPTHYPKLRVLDISSNSLEGPIPGALLSMPTLEEIHLQNNGMTGNIGPLPSSGSRIRLLDLSHNRFDGDLPGVFGSLTNLQVLNLAANNLSGSLPSSMNDIVSLSSLDVSQNHFTGPLPSNLSSNIMAFNVSYNDLSGTVPENLKNFPPPSFYPGNSKLVLPAGSPGSSASEASKNKSTNKLVKVVIIVSCAVALIILILVAILLFCICKSRRREERSITGKETNRRAQTIPSGSGGGMVVSAEDLVASRKGSSSEILSPDEKLAVATGFSPSKTSNLSWSPGSGDSFPADQQLARLDVRSPDRLVGELHFLDDSIKLTPEELSRAPAEVLGRSSHGTSYRATLDNGVFLTVKWLREGVAKQRKEFAKEVKKFSNIRHPNVVTLRGYYWGPTQHEKLILSDYISPGSLASFLYDRPGRKGPPLAWTQRLKIAVDVARGLNYLHFDRAVPHGNLKATNILLDGAELNARVADYCLHRLMTQAGTVEQILDAGILGYRAPELAASRKPLPSFKSDVYAFGVILLEILTGRCAGDVITGEQEGVDLTDWVRLRVAEGRGAECFDSVLTQEMGSDPVTEKGMKEVLGIALRCIRSVSERPGIKTIYEDLSSI.

Residues 1 to 18 (MNLSRILLLSMFFLSAMG) form the signal peptide. Topologically, residues 19–630 (QLPSQDIMAL…NKSTNKLVKV (612 aa)) are extracellular. LRR repeat units follow at residues 73–93 (GVVLDNLGLTADADFSLFSNL), 94–119 (TKLVKLSMSNNSLSGVLPNDLGSFKS), 121–141 (QFLDLSDNLFSSSLPKEIGRS), 142–165 (VSLRNLSLSGNNFSGEIPESMGGL), 166–189 (ISLQSLDMSSNSLSGPLPKSLTRL), 191–212 (DLLYLNLSSNGFTGKMPRGFEL), 213–237 (ISSLEVLDLHGNSIDGNLDGEFFLL), 239–260 (NASYVDISGNRLVTTSGKLLPG), 262–285 (SESIKHLNLSHNQLEGSLTSGFQL), 286–309 (FQNLKVLDLSYNMLSGELPGFNYV), 310–333 (YDLEVLKLSNNRFSGSLPNNLLKG), 335–357 (SLLLTTLDLSGNNLSGPVSSIMS), and 358–384 (TTLHTLDLSSNSLTGELPLLTGGCVLL). A glycan (N-linked (GlcNAc...) asparagine) is linked at Asn92. A phosphoserine; by HT1 mark is found at Ser100 and Ser102. N-linked (GlcNAc...) asparagine glycosylation is present at Asn103. Ser105 and Ser126 each carry phosphoserine; by HT1. N-linked (GlcNAc...) asparagine glycans are attached at residues Asn146 and Asn153. A glycan (N-linked (GlcNAc...) asparagine) is linked at Asn196. The N-linked (GlcNAc...) asparagine glycan is linked to Asn239. The residue at position 262 (Ser262) is a Phosphoserine; by HT1. A glycan (N-linked (GlcNAc...) asparagine) is linked at Asn269. Position 278 is a phosphoserine; by HT1 (Ser278). Thr280 carries the phosphothreonine; by HT1 modification. Ser281 carries the post-translational modification Phosphoserine; by HT1. Ser325 carries the phosphoserine; by HT1 modification. Residue Asn347 is glycosylated (N-linked (GlcNAc...) asparagine). An N-linked (GlcNAc...) asparagine glycan is attached at Asn394. LRR repeat units follow at residues 401–425 (WENIEYLDLSQNHFTGSFPDATPQL), 426–449 (LRANHLNLSYNKLTGSLPERIPTH), 450–474 (YPKLRVLDISSNSLEGPIPGALLSM), 476–498 (TLEEIHLQNNGMTGNIGPLPSSG), 499–521 (SRIRLLDLSHNRFDGDLPGVFGS), 522–546 (LTNLQVLNLAANNLSGSLPSSMNDI), 548–570 (SLSSLDVSQNHFTGPLPSNLSSN), and 572–592 (MAFNVSYNDLSGTVPENLKNF). Tyr406 carries the phosphotyrosine; by HT1 modification. Ser410 bears the Phosphoserine; by HT1 mark. Thr415 bears the Phosphothreonine; by HT1 mark. The residue at position 417 (Ser417) is a Phosphoserine; by HT1. Asn432 carries an N-linked (GlcNAc...) asparagine glycan. The residue at position 434 (Ser434) is a Phosphoserine; by HT1. N-linked (GlcNAc...) asparagine glycans are attached at residues Asn534, Asn566, and Asn575. Residues Ser613, Ser614, and Ser616 each carry the phosphoserine; by HT1 modification. Asn621 carries an N-linked (GlcNAc...) asparagine glycan. A helical membrane pass occupies residues 631 to 651 (VIIVSCAVALIILILVAILLF). Topologically, residues 652–1053 (CICKSRRREE…KTIYEDLSSI (402 aa)) are cytoplasmic. Over residues 662 to 671 (RSITGKETNR) the composition is skewed to basic and acidic residues. Positions 662 to 684 (RSITGKETNRRAQTIPSGSGGGM) are disordered. Phosphothreonine; by HT1 occurs at positions 669 and 675. Phosphoserine; by HT1 is present on residues Ser678, Ser680, Ser698, Ser699, and Ser700. Position 704 is a phosphoserine (Ser704). Thr713 is modified (phosphothreonine; by HT1). Phosphoserine; by HT1 is present on residues Ser716 and Ser718. Thr720 bears the Phosphothreonine; by HT1 mark. Phosphoserine; by HT1 is present on residues Ser721, Ser724, and Ser760. Thr764 bears the Phosphothreonine; by HT1 mark. Position 769 is a phosphoserine; by HT1 (Ser769). Positions 770 to 1053 (RAPAEVLGRS…KTIYEDLSSI (284 aa)) constitute a Protein kinase domain. ATP is bound by residues 776 to 784 (LGRSSHGTS) and Lys798. Thr928 and Thr1010 each carry phosphothreonine; by HT1. Ser1015 is modified (phosphoserine; by HT1). Thr1045 is subject to Phosphothreonine; by HT1. Tyr1047 bears the Phosphotyrosine; by HT1 mark. Phosphoserine; by HT1 occurs at positions 1051 and 1052.

The protein belongs to the protein kinase superfamily. Ser/Thr protein kinase family. Interacts with SLAC1 (via N-terminus). Binds to ABI2, but not ABI1. Interacts with CPK3. Post-translationally, phosphorylated by HT1; this phosphorylation is inhibited by MPK12 and MPK4. In terms of tissue distribution, expressed in guard cells and in the vasculature of roots and leaves.

The protein localises to the cell membrane. It carries out the reaction L-seryl-[protein] + ATP = O-phospho-L-seryl-[protein] + ADP + H(+). The enzyme catalyses L-threonyl-[protein] + ATP = O-phospho-L-threonyl-[protein] + ADP + H(+). Negatively regulated by ABI2. Receptor kinase acting as an early component in abscisic acid (ABA) signaling. Required for darkness, ABA, high CO(2) and hydrogen peroxide (H(2)O(2)) induction of S-type anion currents in guard cells leading to stomatal closure, possibly via the phosphorylation and activation of the anion channel SLAC1 and as a scaffolding component. Seems to act in parallel with SRK2E/OST1 in the ABA signaling pathway which regulates stomatal movement. Binds ATP. Involved in the local and/or systemic stomatal responses (e.g. stomatal closure) to light stress. The protein is LRR receptor-like serine/threonine-protein kinase GHR1 of Arabidopsis thaliana (Mouse-ear cress).